We begin with the raw amino-acid sequence, 205 residues long: Syndecan 4-B (205 aa).

Residues 1–17 (MNRLLLLLALVLSGVAA) form the signal peptide. Over 18–162 (ESIRETETMD…FFQRTEVIVA (145 aa)) the chain is Extracellular. The segment at 26–113 (MDPTSMLEYE…HDFDETKTGR (88 aa)) is disordered. 3 O-linked (Xyl...) (glycosaminoglycan) serine glycosylation sites follow: serine 37, serine 73, and serine 75. Residues 44–94 (VFVDEDDDDDYEDGVDYEIDSESDNDEDYSGSGDDDFDDEDNVEDEDEEET) are compositionally biased toward acidic residues. Residues 102–113 (PEHDFDETKTGR) are compositionally biased toward basic and acidic residues. The helical transmembrane segment at 163 to 183 (IIAGTLVGLVVAVSFIVFLVI) threads the bilayer. Over 184-205 (RRNQNGDLVKKPIYKKTSTMEV) the chain is Cytoplasmic.

The protein belongs to the syndecan proteoglycan family. Interacts with the Wnt receptor fzd7 and its signal transducer dvl2/dsh. In terms of processing, O-glycosylated; contains both chondroitin sulfate and heparan sulfate. Ser-37, Ser-73 and Ser-75 can all be modified by either chondroitin sulfate or heparan sulfate, and the protein exists in forms that contain only chondroitin sulfate, only heparan sulfate and both chondroitin sulfate and heparan sulfate. In terms of tissue distribution, expressed in the animal hemisphere from the 4-cell to the blastula stage. During gastrulation, expressed in the involuting dorsal mesoderm and ectoderm. After involution, localized mainly to the anterior neuroectoderm. At later stages, expressed in the brain, branchial arches, pronephros, tailbud, and at low levels in the somites.

The protein resides in the membrane. Functionally, cell surface proteoglycan. Regulates non-canonical Wnt signaling, being necessary and sufficient for fibronectrin-mediated translocation of dvl2/dsh to the plasma membrane. Required for proper convergent extension movements during gastrulation, which shape the neural plate, and for subsequent neural tube closure. This is Syndecan 4-B (sdc4-b) from Xenopus laevis (African clawed frog).